The primary structure comprises 1303 residues: MSTTKFNSISPIELLEIISSYDIQDEIKLSHIQNLKTHIKKDTIDLRNVPIYLQIITKGLEITRLNISSVSFNSLSYLIKRISVQDKSGNILKEECFLILPILINKLGNASSPAGTNSAKKSLEDYWLSSPIEVEDALTEIAFENPNTKITIETIDWMTQILKNISAKFNVPKFLPKILHSIEINPHNEEIIVSTKELLSIYLEKNPSAIEGFKKQIESHSLAQATKDKLLGSVISKLRGSDPEPHVQRANTPRSNTPVSQIQSSLVDVGHDVELLELLNKVNYEIDSSIKALDIRDANSLFNTFEIFMPCFDGKETESNWKVREKNILQMRSILRGNSATQFRSELVQCIHTIANGMCKGASSLRTTLSSNSCQLIKECAVILKKSLEPVAESLFPTLIKLCSSTKNIASTNANMSVAALYANLPYTSKMIQRITLASEDRNYQPRSYSLIWLHILLLKIGIDRSYIGHHDSSFIEAANKVFMKLLKDANPNVRQTAKECYWCFTRVFPEDAERLLKRLEPNIVRALERSQRESGGSGIAPIRTLSSRPSRPSLKEAILEKNKELRQRRPPSRNSGEQSTKIKSVPLPRPTKSSSRLEKSLLRPDVGHKSQPAVRASSWTYPSTQSGPKATFKQRERSKTEVHKKSPLEISRPSSRLDTGAVSSFNNKNDPMINFLSSSDSDLIKEGINLLKYAIIGKENLPSEINSLLKSISEKHVQFMKPLFTSNDYTFKKAASLLLPDDFLRVCALVFDEFDEAVISLIIQCIDVSTFYESACNLLTLVADTPNIPGSHALVMQISNQKLTITKSILQALSIALSKHAVTDVQFGEIFQELVKLIIVLKATDYYSLLCQLFRQLYTIDSNKFSLLVEDVEGKLKEEVEFIVGIESTMTLERPSSKLDYDLTVVKPTSNLGTFVLSQKPSADDFTMLLPKRSEFLGSGEVYNSKMVAKIEASDSSPQKQSQMDQISSKRSNSEHQSEVLVDDFANVSIADGGGSKLNQSKNDDDNLKQFMERIDPLKPISNKIRKISIYEDAKQNSEKPKLERNWGGFQYAKFSRAIRVNAVAENMSLTSQEFESCCSKLVETPSQSALLKMTWFVDSLSVSSYDYQEFFLNKGKHKLEKSLWEFFSKIDKSDHSLVMNGLFLLKQLLKFNDTPNVDKLFALLVDTCSQEELDSELYFIWNEMLLSLNHDELMKSFEKNALNYLEGEENNLTISSLCLNYLAKVLVDDNCLDVAKIYRLDTIFGKLFHEREVMFRKSATICYSNLLKNTNVSPEVKDTLDKVKSRYPASTQRLIEFYMKR.

3 disordered regions span residues 239 to 259 (RGSDPEPHVQRANTPRSNTPV), 531 to 664 (SQRE…GAVS), and 953 to 977 (EASDSSPQKQSQMDQISSKRSNSEH). The segment covering 249–259 (RANTPRSNTPV) has biased composition (polar residues). Basic and acidic residues predominate over residues 554-568 (SLKEAILEKNKELRQ). Residues 573–583 (SRNSGEQSTKI) show a composition bias toward polar residues. Positions 596–609 (SRLEKSLLRPDVGH) are enriched in basic and acidic residues. A compositionally biased stretch (polar residues) spans 618-629 (SSWTYPSTQSGP). Residues 634–648 (KQRERSKTEVHKKSP) are compositionally biased toward basic and acidic residues. 2 stretches are compositionally biased toward polar residues: residues 653-664 (RPSSRLDTGAVS) and 955-972 (SDSSPQKQSQMDQISSKR).

It belongs to the CLASP family. As to quaternary structure, interacts with microtubules.

Its subcellular location is the cytoplasm. It is found in the cytoskeleton. The protein localises to the nucleus. It localises to the spindle. Its function is as follows. Microtubule binding protein that promotes the stabilization of dynamic microtubules. Required for mitotic spindle formation. This chain is Protein STU1 (STU1), found in Candida albicans (strain SC5314 / ATCC MYA-2876) (Yeast).